Reading from the N-terminus, the 865-residue chain is cGMP-specific 3',5'-cyclic phosphodiesterase (865 aa).

Over residues 69–83 the composition is skewed to low complexity; it reads CSCSSQQSSRADSSA. Residues 69-92 are disordered; it reads CSCSSQQSSRADSSAPGTPTRKIS. S92 carries the phosphoserine modification. GAF domains lie at 154 to 304 and 336 to 493; these read DVTA…GIVL and SLEV…GLGI. A PDEase domain is found at 526–850; sequence ETKELQSLAA…QKWQALAEQQ (325 aa). H603 acts as the Proton donor in catalysis. Zn(2+)-binding residues include H607, H643, D644, and D754. D644 lines the Mg(2+) pocket. Q807 serves as a coordination point for 3',5'-cyclic GMP.

The protein belongs to the cyclic nucleotide phosphodiesterase family. Zn(2+) serves as cofactor. Mg(2+) is required as a cofactor. In terms of processing, phosphorylation is regulated by binding of cGMP to the two allosteric sites. Phosphorylation by PRKG1 leads to its activation. As to expression, isoform PDE5A1 and isoform PDE5A2 are highly expressed in the cerebellum, hippocampus, retina, lung, heart, spleen, and thoracic artery. Isoform PDE5A1, but not isoform PDE5A2, is also abundantly expressed in the pylorus.

The protein resides in the cytoplasm. It localises to the cytosol. The catalysed reaction is 3',5'-cyclic GMP + H2O = GMP + H(+). The protein operates within purine metabolism; 3',5'-cyclic GMP degradation; GMP from 3',5'-cyclic GMP: step 1/1. Its activity is regulated as follows. Inhibited by zaprinast. Plays a role in signal transduction by regulating the intracellular concentration of cyclic nucleotides. This phosphodiesterase catalyzes the specific hydrolysis of cGMP to 5'-GMP. Specifically regulates nitric-oxide-generated cGMP. This chain is cGMP-specific 3',5'-cyclic phosphodiesterase (PDE5A), found in Canis lupus familiaris (Dog).